Reading from the N-terminus, the 161-residue chain is FAD synthase (161 aa).

ATP contacts are provided by residues 19 to 20 (TF), 24 to 27 (HPGH), Asp106, and Tyr133.

This sequence belongs to the archaeal FAD synthase family. As to quaternary structure, homodimer. Requires a divalent metal cation as cofactor.

It carries out the reaction FMN + ATP + H(+) = FAD + diphosphate. The protein operates within cofactor biosynthesis; FAD biosynthesis; FAD from FMN: step 1/1. Catalyzes the transfer of the AMP portion of ATP to flavin mononucleotide (FMN) to produce flavin adenine dinucleotide (FAD) coenzyme. The polypeptide is FAD synthase (Methanothermobacter marburgensis (strain ATCC BAA-927 / DSM 2133 / JCM 14651 / NBRC 100331 / OCM 82 / Marburg) (Methanobacterium thermoautotrophicum)).